Here is a 473-residue protein sequence, read N- to C-terminus: Phosphatidylserine synthase 2 (473 aa).

Residues 1–25 (MRRGERRVAGGSGSESPLLKGRRST) are disordered. The Cytoplasmic portion of the chain corresponds to 1-40 (MRRGERRVAGGSGSESPLLKGRRSTESEVYDDGTNTFFWR). Residues Ser-12, Ser-14, and Ser-16 each carry the phosphoserine modification. A helical membrane pass occupies residues 41–61 (AHTLTVLFILTCALGYVTLLE). Topologically, residues 62–74 (ETPQDTAYNTKRG) are lumenal. The chain crosses the membrane as a helical span at residues 75-95 (IVASILVFLCFGVTQAKDGPF). Over 96 to 104 (SRPHPAYWR) the chain is Cytoplasmic. Residues 105–125 (FWLCVSVVYELFLIFILFQTV) traverse the membrane as a helical segment. The Lumenal segment spans residues 126-291 (QDGRQFLKYV…EWKPASSLHR (166 aa)). Asn-159 carries N-linked (GlcNAc...) asparagine glycosylation. A helical transmembrane segment spans residues 292 to 312 (WLAVCGIILVFLLAELNTFYL). Position 313 (Lys-313) is a topological domain, cytoplasmic. A helical transmembrane segment spans residues 314 to 334 (FVLWMPPEHYLVLLRLVFFVN). Over 335 to 354 (VGGVAMREIYDFMDELKPHR) the chain is Lumenal. Residues 355–375 (KLGQQAWLVAAITVTELLIVV) traverse the membrane as a helical segment. Topologically, residues 376 to 381 (KYDPHT) are cytoplasmic. Residues 382–402 (LTLSLPFYISQCWTLGSILVL) traverse the membrane as a helical segment. Residues 403–473 (TWTVWRFFLR…TAEEGTSAAS (71 aa)) lie on the Lumenal side of the membrane. The tract at residues 422-473 (RRQKQQSHQARAVNNRDGHPGPDDDLLGTGTAEEEGTTNDGVTAEEGTSAAS) is disordered.

It belongs to the phosphatidyl serine synthase family. In terms of tissue distribution, highly expressed in testis. Detected at lower levels in kidney and heart.

It is found in the endoplasmic reticulum membrane. The protein localises to the membrane. It carries out the reaction a 1,2-diacyl-sn-glycero-3-phosphoethanolamine + L-serine = a 1,2-diacyl-sn-glycero-3-phospho-L-serine + ethanolamine. The catalysed reaction is 1-hexadecanoyl-2-(9Z-octadecenoyl)-sn-glycero-3-phosphoethanolamine + L-serine = 1-hexadecanoyl-2-(9Z-octadecenoyl)-sn-glycero-3-phospho-L-serine + ethanolamine. The enzyme catalyses 1-hexadecanoyl-2-(4Z,7Z,10Z,13Z,16Z,19Z-docosahexaenoyl)-sn-glycero-3-phosphoethanolamine + L-serine = 1-hexadecanoyl-2-(4Z,7Z,10Z,13Z,16Z,19Z-docosahexaenoyl)-sn-glycero-3-phosphoserine + ethanolamine. It catalyses the reaction 1-octadecanoyl-2-(5Z,8Z,11Z,14Z)-eicosatetraenoyl-sn-glycero-3-phosphoethanolamine + L-serine = 1-octadecanoyl-2-(5Z,8Z,11Z,14Z)-eicosatetraenoyl-sn-glycero-3-phosphoserine + ethanolamine. It carries out the reaction 1-octadecanoyl-2-(4Z,7Z,10Z,13Z,16Z,19Z-docosahexaenoyl)-sn-glycero-3-phosphoethanolamine + L-serine = 1-octadecanoyl-2-(4Z,7Z,10Z,13Z,16Z,19Z-docosahexaenoyl)-sn-glycero-3-phosphoserine + ethanolamine. The catalysed reaction is 1-(1Z-octadecenyl)-2-(4Z,7Z,10Z,13Z,16Z,19Z-docosahexaenoyl)-sn-glycero-3-phosphoethanolamine + L-serine = 1-(1Z-octadecenyl)-2-(4Z,7Z,10Z,13Z,16Z,19Z-docosahexaenoyl)-sn-glycero-3-phospho-L-serine + ethanolamine. The enzyme catalyses 1-octadecanoyl-2-(9Z-octadecenoyl)-sn-glycero-3-phosphoethanolamine + L-serine = 1-octadecanoyl-2-(9Z-octadecenoyl)-sn-glycero-3-phospho-L-serine + ethanolamine. It catalyses the reaction 1-(1Z-octadecenyl)-2-(9Z-octadecenoyl)-sn-glycero-3-phosphoethanolamine + L-serine = 1-(1Z-octadecenyl)-2-(9Z-octadecenoyl)-sn-glycero-3-phospho-L-serine + ethanolamine. It carries out the reaction 1-(1Z-octadecenyl)-2-(5Z,8Z,11Z,14Z- eicosatetraenoyl)-sn-glycero-3-phosphoethanolamine + L-serine = 1-(1Z-octadecenyl)-2-(5Z,8Z,11Z,14Z-eicosatetraenoyl)-sn-glycero-3-phospho-L-serine + ethanolamine. The protein operates within phospholipid metabolism; phosphatidylserine biosynthesis. With respect to regulation, almost complete inhibition by ethanolamine in both the mitochondria-associated membrane (MAM) and endoplasmic reticulum (ER) per se. In terms of biological role, catalyzes a base-exchange reaction in which the polar head group of phosphatidylethanolamine (PE) or phosphatidylcholine (PC) is replaced by L-serine. Catalyzes the conversion of phosphatatidylethanolamine and does not act on phosphatidylcholine. Can utilize both phosphatidylethanolamine (PE) plasmalogen and diacyl PE as substrate and the latter is six times better utilized, indicating the importance of an ester linkage at the sn-1 position. Although it shows no sn-1 fatty acyl preference, exhibits significant preference towards docosahexaenoic acid (22:6n-3) compared with 18:1 or 20:4 at the sn-2 position. This is Phosphatidylserine synthase 2 (Ptdss2) from Mus musculus (Mouse).